The following is a 749-amino-acid chain: Sentrin-specific protease 5 (749 aa).

The segment covering 268–279 (TGDHQENLRDNN) has biased composition (basic and acidic residues). 2 disordered regions span residues 268 to 288 (TGDH…CNPV) and 394 to 440 (QESG…EEDG). Residues 557-718 (FYNKHMLDMD…VFVLQYCKCL (162 aa)) form a protease region. Active-site residues include histidine 640, aspartate 657, and cysteine 707.

The protein belongs to the peptidase C48 family. As to quaternary structure, interacts with CCAR2.

The protein resides in the nucleus. The protein localises to the nucleolus. Functionally, protease that catalyzes two essential functions in the SUMO pathway: processing of full-length SUMO3 to its mature form and deconjugation of SUMO2 and SUMO3 from targeted proteins. Has weak proteolytic activity against full-length SUMO1 or SUMO1 conjugates. Required for cell division. This chain is Sentrin-specific protease 5 (Senp5), found in Mus musculus (Mouse).